A 474-amino-acid chain; its full sequence is Recombinase Flp protein (474 aa).

A Tyr recombinase Flp-type domain is found at 135-421; it reads LSNNVGAEIS…LYLYTYAQQK (287 aa). The active-site O-(3'-phospho-DNA)-tyrosine intermediate is the tyrosine 342. The interval 426-474 is disordered; that stretch reads ADPNEQNRLFSSESPAHPFLTPQSTGSSTPLTWTAPKTLSTGLMTPGEE. 2 stretches are compositionally biased toward polar residues: residues 429-439 and 446-468; these read NEQNRLFSSES and TPQS…STGL.

The protein belongs to the 'phage' integrase family.

Catalyzes the recombination between the large inverted repetitions of the plasmid. The chain is Recombinase Flp protein from Zygosaccharomyces bailii.